The chain runs to 276 residues: Glutamate 5-kinase (276 aa).

Lysine 14 lines the ATP pocket. 3 residues coordinate substrate: serine 54, aspartate 141, and asparagine 157. Residues 177–178 (SD) and 219–225 (TGGMLTK) contribute to the ATP site.

This sequence belongs to the glutamate 5-kinase family.

Its subcellular location is the cytoplasm. It carries out the reaction L-glutamate + ATP = L-glutamyl 5-phosphate + ADP. Its pathway is amino-acid biosynthesis; L-proline biosynthesis; L-glutamate 5-semialdehyde from L-glutamate: step 1/2. Functionally, catalyzes the transfer of a phosphate group to glutamate to form L-glutamate 5-phosphate. This chain is Glutamate 5-kinase, found in Listeria monocytogenes serotype 4b (strain CLIP80459).